Reading from the N-terminus, the 103-residue chain is Large ribosomal subunit protein bL25 (103 aa).

The protein belongs to the bacterial ribosomal protein bL25 family. Part of the 50S ribosomal subunit; part of the 5S rRNA/L5/L18/L25 subcomplex. Contacts the 5S rRNA. Binds to the 5S rRNA independently of L5 and L18.

Functionally, this is one of the proteins that binds to the 5S RNA in the ribosome where it forms part of the central protuberance. The chain is Large ribosomal subunit protein bL25 from Blochmanniella floridana.